The sequence spans 741 residues: Catalase-peroxidase 2 (741 aa).

The signal sequence occupies residues 1–28 (MQKKRIGKSVVAALAIIAMSAGTVAAWA). A cross-link (tryptophyl-tyrosyl-methioninium (Trp-Tyr) (with M-254)) is located at residues 107–228 (WHGAGTYRTY…LAATQMGLIY (122 aa)). The active-site Proton acceptor is His108. A cross-link (tryptophyl-tyrosyl-methioninium (Tyr-Met) (with W-107)) is located at residues 228–254 (YVNPEGPNGNPDPVAAAKDIREAFGRM). Residue His269 participates in heme b binding.

Belongs to the peroxidase family. Peroxidase/catalase subfamily. In terms of assembly, homodimer or homotetramer. The cofactor is heme b. Formation of the three residue Trp-Tyr-Met cross-link is important for the catalase, but not the peroxidase activity of the enzyme.

It carries out the reaction H2O2 + AH2 = A + 2 H2O. The enzyme catalyses 2 H2O2 = O2 + 2 H2O. Its function is as follows. Bifunctional enzyme with both catalase and broad-spectrum peroxidase activity. The chain is Catalase-peroxidase 2 from Burkholderia ambifaria (strain MC40-6).